A 458-amino-acid polypeptide reads, in one-letter code: MELPFAESWKIKMVEPIHKSTREQREQWLKEAHYNVFQLTADKVYIDLLTDSGTGAMSDRQWSALMMGDESYAGASSFLKLKETITKITGFDYILPTHQGRAAENVLFSYLVKQGDIVPGNSHFDTTKGHIESRHATALDCTVDIAKDTQAEYPFKGNVDIKKLEKALEENKDKIPFIIITITNNTAGGQPVSMANLREVRELADKYKKPVLFDSARFAENAYFIKVREEGYANKTIKEICLEMFKYADGMTMSAKKDGLVNIGGFIATRLKEWYEGAKSYCIMYEGYLTYGGMAGRDMSALAAGLEENTEFEMLETRIKQVEYLAKRLDEYGIPYQRPAGGHAIFLDARKILTHVPAEEFPAQTLTVELYLEAGIRGVEIGYILADRDPVTRENRFGGLDLLRLAIPRRVYTDNHMNVVAVALKNVFDRREKITRGVKITWEAEIMRHFTVQLERLQ.

Lys-257 bears the N6-(pyridoxal phosphate)lysine mark.

Belongs to the beta-eliminating lyase family. Pyridoxal 5'-phosphate is required as a cofactor.

This is Probable beta-eliminating lyase from Trichomonas vaginalis (strain ATCC PRA-98 / G3).